The chain runs to 199 residues: Large ribosomal subunit protein bL25 (199 aa).

This sequence belongs to the bacterial ribosomal protein bL25 family. CTC subfamily. In terms of assembly, part of the 50S ribosomal subunit; part of the 5S rRNA/L5/L18/L25 subcomplex. Contacts the 5S rRNA. Binds to the 5S rRNA independently of L5 and L18.

Its function is as follows. This is one of the proteins that binds to the 5S RNA in the ribosome where it forms part of the central protuberance. This is Large ribosomal subunit protein bL25 from Nostoc punctiforme (strain ATCC 29133 / PCC 73102).